We begin with the raw amino-acid sequence, 129 residues long: Class I hydrophobin 11 (129 aa).

The N-terminal stretch at 1–19 (MRLTPLLAALALPLLTVLA) is a signal peptide. Disulfide bonds link Cys-48–Cys-106, Cys-55–Cys-100, Cys-56–Cys-89, and Cys-107–Cys-122.

This sequence belongs to the fungal hydrophobin family. In terms of assembly, self-assembles to form functional amyloid fibrils called rodlets. Self-assembly into fibrillar rodlets occurs spontaneously at hydrophobic:hydrophilic interfaces and the rodlets further associate laterally to form amphipathic monolayers.

Its subcellular location is the secreted. It is found in the cell wall. Aerial growth, conidiation, and dispersal of filamentous fungi in the environment rely upon a capability of their secreting small amphipathic proteins called hydrophobins (HPBs) with low sequence identity. Class I can self-assemble into an outermost layer of rodlet bundles on aerial cell surfaces, conferring cellular hydrophobicity that supports fungal growth, development and dispersal; whereas Class II form highly ordered films at water-air interfaces through intermolecular interactions but contribute nothing to the rodlet structure. The polypeptide is Class I hydrophobin 11 (Pleurotus ostreatus (strain PC15) (Oyster mushroom)).